We begin with the raw amino-acid sequence, 145 residues long: Protein BUD31 homolog 3 (145 aa).

This sequence belongs to the BUD31 (G10) family.

The protein resides in the nucleus. This is Protein BUD31 homolog 3 from Oryza sativa subsp. japonica (Rice).